We begin with the raw amino-acid sequence, 160 residues long: Putative pre-16S rRNA nuclease (160 aa).

It belongs to the YqgF nuclease family.

Its subcellular location is the cytoplasm. Could be a nuclease involved in processing of the 5'-end of pre-16S rRNA. This chain is Putative pre-16S rRNA nuclease, found in Jannaschia sp. (strain CCS1).